The chain runs to 110 residues: Single-stranded DNA-binding protein 1 (110 aa).

In terms of domain architecture, SSB spans 1–104 (MNKILLIGRM…VVGEEVQFLE (104 aa)).

Homotetramer.

In Clostridium acetobutylicum (strain ATCC 824 / DSM 792 / JCM 1419 / IAM 19013 / LMG 5710 / NBRC 13948 / NRRL B-527 / VKM B-1787 / 2291 / W), this protein is Single-stranded DNA-binding protein 1 (ssb1).